We begin with the raw amino-acid sequence, 28 residues long: Ranatuerin-2LT (28 aa).

An intrachain disulfide couples Cys23 to Cys28.

As to expression, expressed by the skin glands.

It localises to the secreted. In terms of biological role, has antibacterial activity. This is Ranatuerin-2LT from Rana latastei (Italian agile frog).